A 94-amino-acid chain; its full sequence is Co-chaperonin GroES (94 aa).

It belongs to the GroES chaperonin family. In terms of assembly, heptamer of 7 subunits arranged in a ring. Interacts with the chaperonin GroEL.

It localises to the cytoplasm. Functionally, together with the chaperonin GroEL, plays an essential role in assisting protein folding. The GroEL-GroES system forms a nano-cage that allows encapsulation of the non-native substrate proteins and provides a physical environment optimized to promote and accelerate protein folding. GroES binds to the apical surface of the GroEL ring, thereby capping the opening of the GroEL channel. This chain is Co-chaperonin GroES, found in Listeria monocytogenes serotype 4b (strain CLIP80459).